The sequence spans 162 residues: Retinoic acid receptor responder protein 2 (162 aa).

The signal sequence occupies residues 1–20 (MKCLLISLALWLGTVGTRGT). 3 disulfides stabilise this stretch: Cys79/Cys89, Cys100/Cys119, and Cys103/Cys134. The propeptide occupies 157-162 (RALRTK).

Post-translationally, secreted in an inactive precursor form, prochemerin, which is proteolytically processed by a variety of extracellular proteases to generate forms with differing levels of bioactivity. For example, the removal of six amino acids results in chemerin-156, which exhibits the highest activity, while removal of seven amino acids results in chemerin-155 which has slightly less activity. Some proteases are able to cleave at more than one site and chemerin forms may be sequentially processed by different enzymes to modulate activity levels. The coordinated expression and activity of chemerin-modifying enzymes is essential for regulating its bioactivation, inactivation and, consequently, biological function. Cathepsin G cleaves seven C-terminal amino acids from prochemerin (chemerin-155), elastase is able to cleave six (chemerin-156), eight (chemerin-154) or eleven (chemerin-151), plasmin cleaves five amino acids (chemerin-157), and tryptase cleaves five (chemerin-157) or eight (chemerin-154). Multiple cleavages might be required to fully activate chemerin, with an initial tryptase cleavage resulting in chemerin with low activity (chemerin-157), and a second cleavage by carboxypeptidase N or B producing highly active chemerin (chemerin-156). In terms of tissue distribution, expressed in the differentiated adipocytes (at protein level). Abundantly expressed in the liver, adipose tissue including visceral, epididymal, and brown adipose tissue.

It is found in the secreted. In terms of biological role, adipocyte-secreted protein (adipokine) that regulates adipogenesis, metabolism and inflammation through activation of the chemokine-like receptor 1 (CMKLR1). Also acts as a ligand for CMKLR2. Can also bind to C-C chemokine receptor-like 2 (CCRL2), but with a lower affinity than it does to CMKLR1 or CMKLR2. Positively regulates adipocyte differentiation, modulates the expression of adipocyte genes involved in lipid and glucose metabolism and might play a role in angiogenesis, a process essential for the expansion of white adipose tissue. Also acts as a pro-inflammatory adipokine, causing an increase in secretion of pro-inflammatory and prodiabetic adipokines, which further impair adipose tissue metabolic function and have negative systemic effects including impaired insulin sensitivity, altered glucose and lipid metabolism, and a decrease in vascular function in other tissues. Can have both pro- and anti-inflammatory properties depending on the modality of enzymatic cleavage by different classes of proteases. Acts as a chemotactic factor for leukocyte populations expressing CMKLR1, particularly immature plasmacytoid dendritic cells, but also immature myeloid DCs, macrophages and natural killer cells. Exerts an anti-inflammatory role by preventing TNF/TNFA-induced VCAM1 expression and monocytes adhesion in vascular endothelial cells. The effect is mediated via inhibiting activation of NF-kappa-B and CRK/p38 through stimulation of AKT1/NOS3 signaling and nitric oxide production. Exhibits an antimicrobial function in the skin. The polypeptide is Retinoic acid receptor responder protein 2 (Rarres2) (Mus musculus (Mouse)).